Consider the following 743-residue polypeptide: DNA ligase 2 (743 aa).

NAD(+) is bound by residues Asp-45–Asp-49, Ser-94–Leu-95, and Glu-125. Catalysis depends on Lys-127, which acts as the N6-AMP-lysine intermediate. NAD(+) contacts are provided by Arg-148, Glu-185, Lys-301, and Lys-325. Zn(2+) is bound by residues Cys-419, Cys-422, Cys-438, and Cys-444. The 90-residue stretch at Glu-639 to Pro-728 folds into the BRCT domain. A disordered region spans residues Glu-720 to Glu-743. Low complexity predominate over residues Ala-725–Glu-743.

Belongs to the NAD-dependent DNA ligase family. LigA subfamily. Mg(2+) serves as cofactor. Mn(2+) is required as a cofactor.

It carries out the reaction NAD(+) + (deoxyribonucleotide)n-3'-hydroxyl + 5'-phospho-(deoxyribonucleotide)m = (deoxyribonucleotide)n+m + AMP + beta-nicotinamide D-nucleotide.. Its function is as follows. DNA ligase that catalyzes the formation of phosphodiester linkages between 5'-phosphoryl and 3'-hydroxyl groups in double-stranded DNA using NAD as a coenzyme and as the energy source for the reaction. It is essential for DNA replication and repair of damaged DNA. The sequence is that of DNA ligase 2 from Streptomyces griseus subsp. griseus (strain JCM 4626 / CBS 651.72 / NBRC 13350 / KCC S-0626 / ISP 5235).